Reading from the N-terminus, the 442-residue chain is MDASCLFKALLATNWALFLWDQYITFRQYKAHKNAVKRPNEVKELIGEEDYKKARDYKIDNHLFGFFHSWFNQLLLTAQLIGGYYPFLWYATASYPLHVAVFLSINSIIETIIDLPWDLYSTFIIEDAHGFNKQTIGFYFVDKIKKMLVGFALTMPIVYGIEWIIVNGGPYFFVYIWLFVSVVVLLLMTIYPTFIAPLFDKYFPLPDGDLKTKIEQLAASLSYPLTELYVVNGSKRSAHSNAYMYGFWKNKRIVLYDTLLSGAEKEKVHELYVAAGEKIEETENDKKRGMNNDEVVAVLGHELGHWALWHTLINLVITEVNLFFSFAVFGYFYKWEALYQGFGYHDTPPVIGMMLIFQFVLALYNQLASIGMVIHSRSAEFGADEFAANLGHGENLIGALTKLGVDNLSMPINDSLYSWCTHTHPPVVERVAAVRAFQAKNK.

Topologically, residues 1–62 (MDASCLFKAL…KARDYKIDNH (62 aa)) are lumenal. The chain crosses the membrane as a helical span at residues 63–83 (LFGFFHSWFNQLLLTAQLIGG). A topological domain (cytoplasmic) is located at residue Y84. Residues 85–105 (YPFLWYATASYPLHVAVFLSI) form a helical membrane-spanning segment. Residues 106 to 146 (NSIIETIIDLPWDLYSTFIIEDAHGFNKQTIGFYFVDKIKK) are Lumenal-facing. Residues 147–167 (MLVGFALTMPIVYGIEWIIVN) form a helical membrane-spanning segment. The Cytoplasmic segment spans residues 168-170 (GGP). A helical membrane pass occupies residues 171–191 (YFFVYIWLFVSVVVLLLMTIY). Topologically, residues 192–311 (PTFIAPLFDK…ELGHWALWHT (120 aa)) are lumenal. H301 lines the Zn(2+) pocket. E302 is an active-site residue. H305 contacts Zn(2+). A helical transmembrane segment spans residues 312-332 (LINLVITEVNLFFSFAVFGYF). Topologically, residues 333 to 349 (YKWEALYQGFGYHDTPP) are cytoplasmic. The chain crosses the membrane as a helical span at residues 350–370 (VIGMMLIFQFVLALYNQLASI). Residues 371–442 (GMVIHSRSAE…AVRAFQAKNK (72 aa)) are Lumenal-facing. E380 serves as a coordination point for Zn(2+). D384 functions as the Proton donor in the catalytic mechanism.

It belongs to the peptidase M48A family. Requires Zn(2+) as cofactor.

The protein resides in the endoplasmic reticulum membrane. The protein localises to the membrane. The catalysed reaction is Hydrolyzes the peptide bond -P2-(S-farnesyl or geranylgeranyl)C-P1'-P2'-P3'-COOH where P1' and P2' are amino acids with aliphatic side chains and P3' is any C-terminal residue.. In terms of biological role, proteolytically removes the C-terminal three residues of farnesylated proteins. This is CAAX prenyl protease 1 homolog from Caenorhabditis elegans.